We begin with the raw amino-acid sequence, 137 residues long: DNA-binding protein H-NS (137 aa).

Residues 13 to 65 (TLRAQARECTLETLEEMLEKLEVVVNERREEESAAAAEVEERTRKLQQYREML) are a coiled coil. The DNA-binding element occupies 112–117 (QGRTPA).

Belongs to the histone-like protein H-NS family. As to quaternary structure, homodimer that oligomerizes on DNA into higher-order complexes that form bridges between disparate regions of DNA compacting it. Interacts with Hha, YdgT and StpA.

Its subcellular location is the cytoplasm. The protein localises to the nucleoid. In terms of biological role, a DNA-binding protein implicated in transcriptional repression and chromosome organization and compaction. Binds AT-rich DNA, repressing its transcription; about 754/4438 tested genes (15%) bind to H-NS, 70% of these are AT-rich and correspond to horizontally transferred geness (HTG), thus playing a central role in silencing foreign genes. This offers the selective advantage of silencing foreign DNA. Binds nucleation sites in AT-rich DNA and bridges them, forming higher-order nucleoprotein complexes and condensing the chromosome. A subset of genes are repressed by H-NS in association with Hha and/or YdgT. The sequence is that of DNA-binding protein H-NS (hns) from Salmonella typhimurium (strain 14028s / SGSC 2262).